We begin with the raw amino-acid sequence, 25 residues long: Neuromedin-U-25 (25 aa).

Gln18 is modified (pyrrolidone carboxylic acid). Asparagine amide is present on Asn25.

It belongs to the NmU family.

Its subcellular location is the secreted. In terms of biological role, stimulates uterine smooth muscle contraction and causes selective vasoconstriction. This is Neuromedin-U-25 (NMU) from Canis lupus familiaris (Dog).